The primary structure comprises 301 residues: uncharacterized protein (301 aa).

This is an uncharacterized protein from Sinorhizobium fredii (strain NBRC 101917 / NGR234).